Here is a 225-residue protein sequence, read N- to C-terminus: C-reactive protein (225 aa).

Positions 1–19 are cleaved as a signal peptide; sequence MEKLLWCLLIMISFSRTFG. The region spanning 24–225 is the Pentraxin (PTX) domain; sequence FKKAFVFPKE…DVFIKPQLWS (202 aa). Cys-55 and Cys-116 form a disulfide bridge. The Ca(2+) site is built by Asn-80, Glu-157, Gln-158, Asp-159, and Gln-169.

This sequence belongs to the pentraxin family. As to quaternary structure, homopentamer. Pentraxin (or pentaxin) have a discoid arrangement of 5 non-covalently bound subunits. Interacts with FCN1; may regulate monocyte activation by FCN1. Ca(2+) is required as a cofactor. In terms of tissue distribution, found in plasma.

It is found in the secreted. Displays several functions associated with host defense: it promotes agglutination, bacterial capsular swelling, phagocytosis and complement fixation through its calcium-dependent binding to phosphorylcholine. Can interact with DNA and histones and may scavenge nuclear material released from damaged circulating cells. This is C-reactive protein (Crp) from Mus musculus (Mouse).